Here is a 352-residue protein sequence, read N- to C-terminus: Protein-glutamate methylesterase/protein-glutamine glutaminase 1 (352 aa).

The Response regulatory domain occupies 5-122 (KVLVVDDSAF…SLDVLSVKEE (118 aa)). A 4-aspartylphosphate modification is found at Asp-56. Residues 155–352 (PDQDRKLNKL…EITEEVLSML (198 aa)) enclose the CheB-type methylesterase domain. Residues Ser-170, His-197, and Asp-297 contribute to the active site.

It belongs to the CheB family. Post-translationally, phosphorylated by CheA. Phosphorylation of the N-terminal regulatory domain activates the methylesterase activity.

The protein localises to the cytoplasm. The enzyme catalyses [protein]-L-glutamate 5-O-methyl ester + H2O = L-glutamyl-[protein] + methanol + H(+). The catalysed reaction is L-glutaminyl-[protein] + H2O = L-glutamyl-[protein] + NH4(+). Functionally, involved in chemotaxis. Part of a chemotaxis signal transduction system that modulates chemotaxis in response to various stimuli. Catalyzes the demethylation of specific methylglutamate residues introduced into the chemoreceptors (methyl-accepting chemotaxis proteins or MCP) by CheR. Also mediates the irreversible deamidation of specific glutamine residues to glutamic acid. This Syntrophomonas wolfei subsp. wolfei (strain DSM 2245B / Goettingen) protein is Protein-glutamate methylesterase/protein-glutamine glutaminase 1.